A 382-amino-acid chain; its full sequence is Mannosyl phosphorylinositol ceramide synthase SUR1 (382 aa).

The Cytoplasmic portion of the chain corresponds to 1–6 (MRKELK). Residues 7–27 (YLICFNILLLLSIIYYTFDLL) traverse the membrane as a helical segment. The Extracellular portion of the chain corresponds to 28–269 (TLCIDDTVKD…KALENHILSC (242 aa)). A helical membrane pass occupies residues 270-290 (VVTGFIFGFFILYGEFTFYCW). Residues 291–382 (LCSKNFSNLT…SKYSLGNNSS (92 aa)) lie on the Cytoplasmic side of the membrane. Ser349 is modified (phosphoserine).

Belongs to the glycosyltransferase 32 family. In terms of assembly, heterodimer of SUR1 and CSG2.

It is found in the membrane. The enzyme catalyses a 1D-myo-inositol-1-phospho-N-[(R)-2-hydroxy-very-long-chain fatty acyl]-(R)-4-hydroxysphingoid base + GDP-alpha-D-mannose = an alpha-D-mannosyl-(1&lt;-&gt;6)-1D-myo-inositol-1-phospho-N-[(R)-2-hydroxy-very-long-chain fatty acyl]-(R)-4-hydroxysphingoid base + GDP + H(+). In terms of biological role, involved in the synthesis of mannosyl phosphorylinositol ceramide. Catalyzes the addition of mannosyl to phosphorylinositol ceramide. Suppressor of RVS161 mutation. This chain is Mannosyl phosphorylinositol ceramide synthase SUR1, found in Saccharomyces cerevisiae (strain ATCC 204508 / S288c) (Baker's yeast).